Consider the following 178-residue polypeptide: FXYD domain-containing ion transport regulator 5 (178 aa).

An N-terminal signal peptide occupies residues 1-21 (MSPSGRLCLLTIVGLILPTRG). Over 22-145 (QTLKDTTSSS…FYDEHTLRKR (124 aa)) the chain is Extracellular. Positions 23–131 (TLKDTTSSSS…QTLKPSGFHE (109 aa)) are disordered. Composition is skewed to low complexity over residues 26–36 (DTTSSSSADST) and 68–77 (TPQPQTQTQQ). Over residues 103–125 (DTTTLSERPSPSTDVQTDPQTLK) the composition is skewed to polar residues. The helical transmembrane segment at 146-164 (GLLVAAVLFITGIIILTSG) threads the bilayer. Residues 165–178 (KCRQLSRLCRNRCR) lie on the Cytoplasmic side of the membrane.

This sequence belongs to the FXYD family. Regulatory subunit of the sodium/potassium-transporting ATPase which is composed of a catalytic alpha subunit, a non-catalytic beta subunit and an additional regulatory subunit. The regulatory subunit, a member of the FXYD protein family, modulates the enzymatic activity in a tissue- and isoform-specific way by changing affinities of the Na+/K+-ATPase toward Na(+), K(+) or ATP. Post-translationally, glycosylated.

The protein localises to the cell membrane. The protein resides in the basolateral cell membrane. Its function is as follows. Associates with and regulates the activity of the sodium/potassium-transporting ATPase (NKA) which catalyzes the hydrolysis of ATP coupled with the exchange of Na(+) and K(+) ions across the plasma membrane. May increase NKA activity by increasing the apparent affinity for Na(+). Involved in down-regulation of E-cadherin which results in reduced cell adhesion. Promotes metastasis. In Homo sapiens (Human), this protein is FXYD domain-containing ion transport regulator 5 (FXYD5).